Consider the following 467-residue polypeptide: Ribosomal protein uS12 methylthiotransferase RimO (467 aa).

The segment at 1–27 (MTSNPPDLRPDLAPKPTFGTAPRPDQP) is disordered. The MTTase N-terminal domain occupies 27-137 (PTLGMVSLGC…VLDAVHAAVP (111 aa)). Residues Cys36, Cys72, Cys101, Cys168, Cys172, and Cys175 each contribute to the [4Fe-4S] cluster site. The 244-residue stretch at 154-397 (LTPRHFSYLK…MEKAQAISEA (244 aa)) folds into the Radical SAM core domain. A TRAM domain is found at 400–467 (ASKVGQTLQV…GEYDLWGALR (68 aa)).

It belongs to the methylthiotransferase family. RimO subfamily. It depends on [4Fe-4S] cluster as a cofactor.

The protein localises to the cytoplasm. The enzyme catalyses L-aspartate(89)-[ribosomal protein uS12]-hydrogen + (sulfur carrier)-SH + AH2 + 2 S-adenosyl-L-methionine = 3-methylsulfanyl-L-aspartate(89)-[ribosomal protein uS12]-hydrogen + (sulfur carrier)-H + 5'-deoxyadenosine + L-methionine + A + S-adenosyl-L-homocysteine + 2 H(+). Functionally, catalyzes the methylthiolation of an aspartic acid residue of ribosomal protein uS12. The polypeptide is Ribosomal protein uS12 methylthiotransferase RimO (Ruegeria sp. (strain TM1040) (Silicibacter sp.)).